We begin with the raw amino-acid sequence, 384 residues long: Acetylornithine aminotransferase (384 aa).

Residues 95 to 96 and Phe-122 contribute to the pyridoxal 5'-phosphate site; that span reads GA. Residue Arg-125 coordinates N(2)-acetyl-L-ornithine. 207–210 contacts pyridoxal 5'-phosphate; that stretch reads DEIQ. Lys-236 is subject to N6-(pyridoxal phosphate)lysine. Ser-264 provides a ligand contact to N(2)-acetyl-L-ornithine. Thr-265 lines the pyridoxal 5'-phosphate pocket.

The protein belongs to the class-III pyridoxal-phosphate-dependent aminotransferase family. ArgD subfamily. Homodimer. Requires pyridoxal 5'-phosphate as cofactor.

It is found in the cytoplasm. It catalyses the reaction N(2)-acetyl-L-ornithine + 2-oxoglutarate = N-acetyl-L-glutamate 5-semialdehyde + L-glutamate. Its pathway is amino-acid biosynthesis; L-arginine biosynthesis; N(2)-acetyl-L-ornithine from L-glutamate: step 4/4. This Halalkalibacterium halodurans (strain ATCC BAA-125 / DSM 18197 / FERM 7344 / JCM 9153 / C-125) (Bacillus halodurans) protein is Acetylornithine aminotransferase.